A 216-amino-acid polypeptide reads, in one-letter code: Ras-related protein Rab-2B (216 aa).

GDP contacts are provided by Gly16, Val17, Gly18, Lys19, Ser20, and Cys21. GTP-binding residues include Gly16, Val17, Gly18, Lys19, Ser20, Cys21, and Thr38. Residue Ser20 coordinates Mg(2+). The Switch 1 signature appears at 37 to 42 (LTIGVE). Residues Thr38 and Asp61 each coordinate Mg(2+). A Switch 2 motif is present at residues 63-72 (AGQESFRSIT). The GTP site is built by Gly64, Asn119, Lys120, Asp122, Ala150, and Lys151. A GDP-binding site is contributed by Asn119. GDP is bound by residues Asp122, Ala150, and Lys151. The disordered stretch occupies residues 189–216 (PQQSISTSVGPSASQRNSRDIGSNSGCC). Ser202 is subject to Phosphoserine. S-geranylgeranyl cysteine attachment occurs at residues Cys215 and Cys216.

It belongs to the small GTPase superfamily. Rab family. Interacts (in GTP-bound form) with GARIN4 (via N-terminus). Interacts (in GTP-bound form) with GARIN5A. Interacts (in GTP-bound form) with GARIN1B. Interacts with VPS39 and VPS41. It depends on Mg(2+) as a cofactor. Expressed in kidney, prostate, lung, liver, thymus, colon, pancreas, and skeletal muscle, and low levels in placenta. Not detected in heart, brain, spleen, testis, ovary, small intestine and leukocyte.

Its subcellular location is the cell membrane. The protein resides in the endoplasmic reticulum membrane. It is found in the golgi apparatus membrane. The protein localises to the cytoplasmic vesicle. It localises to the secretory vesicle. Its subcellular location is the acrosome. The protein resides in the autophagosome membrane. It catalyses the reaction GTP + H2O = GDP + phosphate + H(+). Its activity is regulated as follows. Regulated by guanine nucleotide exchange factors (GEFs) which promote the exchange of bound GDP for free GTP, GTPase activating proteins (GAPs) which increase the GTP hydrolysis activity, and GDP dissociation inhibitors (GDIs) which inhibit the dissociation of the nucleotide from the GTPase. In terms of biological role, the small GTPases Rab are key regulators of intracellular membrane trafficking, from the formation of transport vesicles to their fusion with membranes. Rabs cycle between active GTP-bound and inactive GDP-bound states. In their active state, drive transport of vesicular carriers from donor organelles to acceptor organelles to regulate the membrane traffic that maintains organelle identity and morphology. Regulates the compacted morphology of the Golgi. Promotes cytosolic DNA-induced innate immune responses. Regulates IFN responses against DNA viruses by regulating the CGAS-STING signaling axis. Together with RAB2A redundantly required for efficient autophagic flux. This is Ras-related protein Rab-2B from Homo sapiens (Human).